The primary structure comprises 295 residues: 33 kDa chaperonin (295 aa).

2 disulfides stabilise this stretch: Cys-238–Cys-240 and Cys-271–Cys-274.

The protein belongs to the HSP33 family. Post-translationally, under oxidizing conditions two disulfide bonds are formed involving the reactive cysteines. Under reducing conditions zinc is bound to the reactive cysteines and the protein is inactive.

The protein localises to the cytoplasm. Redox regulated molecular chaperone. Protects both thermally unfolding and oxidatively damaged proteins from irreversible aggregation. Plays an important role in the bacterial defense system toward oxidative stress. The protein is 33 kDa chaperonin of Levilactobacillus brevis (strain ATCC 367 / BCRC 12310 / CIP 105137 / JCM 1170 / LMG 11437 / NCIMB 947 / NCTC 947) (Lactobacillus brevis).